The following is a 223-amino-acid chain: MKFAVLKFPGSNCDRDMYNAALKSDVEAEYVDYRNTSLDGFDGVLIPGGFSFGDYLRSGAMASVAPITEAVKQFAKEGKPVLGVCNGFQILTEIGLLPGALLHNDSHLFVSRNESLRVVNHNTAFTNLYNEDETVVYPVAHGEGHYYCTQDMYDRLEANNQIILKYVNNPNGSFNDIAGIINEQGNVCGMMPHPERAIEPILGTDSGVKLFQAMVNSWREQNV.

Positions 2–223 (KFAVLKFPGS…MVNSWREQNV (222 aa)) constitute a Glutamine amidotransferase type-1 domain. The active-site Nucleophile is the C85. Active-site residues include H193 and E195.

As to quaternary structure, part of the FGAM synthase complex composed of 1 PurL, 1 PurQ and 2 PurS subunits.

The protein localises to the cytoplasm. It catalyses the reaction N(2)-formyl-N(1)-(5-phospho-beta-D-ribosyl)glycinamide + L-glutamine + ATP + H2O = 2-formamido-N(1)-(5-O-phospho-beta-D-ribosyl)acetamidine + L-glutamate + ADP + phosphate + H(+). The catalysed reaction is L-glutamine + H2O = L-glutamate + NH4(+). Its pathway is purine metabolism; IMP biosynthesis via de novo pathway; 5-amino-1-(5-phospho-D-ribosyl)imidazole from N(2)-formyl-N(1)-(5-phospho-D-ribosyl)glycinamide: step 1/2. Part of the phosphoribosylformylglycinamidine synthase complex involved in the purines biosynthetic pathway. Catalyzes the ATP-dependent conversion of formylglycinamide ribonucleotide (FGAR) and glutamine to yield formylglycinamidine ribonucleotide (FGAM) and glutamate. The FGAM synthase complex is composed of three subunits. PurQ produces an ammonia molecule by converting glutamine to glutamate. PurL transfers the ammonia molecule to FGAR to form FGAM in an ATP-dependent manner. PurS interacts with PurQ and PurL and is thought to assist in the transfer of the ammonia molecule from PurQ to PurL. In Staphylococcus saprophyticus subsp. saprophyticus (strain ATCC 15305 / DSM 20229 / NCIMB 8711 / NCTC 7292 / S-41), this protein is Phosphoribosylformylglycinamidine synthase subunit PurQ.